The sequence spans 427 residues: Membrane-bound hydrogenase subunit alpha (427 aa).

Residues C68, C71, C374, and C377 each contribute to the Ni(2+) site.

The protein belongs to the complex I 49 kDa subunit family. In terms of assembly, the membrane-bound hydrogenase complex is composed of MbhK and MbhL, and may also contain MbhJ. Requires Ni(2+) as cofactor.

It is found in the cell membrane. The enzyme catalyses H2 + 2 oxidized [2Fe-2S]-[ferredoxin] = 2 reduced [2Fe-2S]-[ferredoxin] + 2 H(+). Its activity is regulated as follows. Inhibited by 0.1 mM Cu(2+). Alpha subunit of a hydrogen-evolving hydrogenase that utilizes protons both as a substrate for hydrogen production and proton translocation. Acts by coupling the redox reaction via ferredoxin and iron-sulfur (Fe-S) clusters to proton translocation across the membrane thereby conserving the redox energy in a proton gradient. The chain is Membrane-bound hydrogenase subunit alpha from Pyrococcus furiosus (strain ATCC 43587 / DSM 3638 / JCM 8422 / Vc1).